The sequence spans 426 residues: Glutamate-1-semialdehyde 2,1-aminomutase (426 aa).

K265 is subject to N6-(pyridoxal phosphate)lysine.

The protein belongs to the class-III pyridoxal-phosphate-dependent aminotransferase family. HemL subfamily. As to quaternary structure, homodimer. It depends on pyridoxal 5'-phosphate as a cofactor.

It localises to the cytoplasm. The catalysed reaction is (S)-4-amino-5-oxopentanoate = 5-aminolevulinate. Its pathway is porphyrin-containing compound metabolism; protoporphyrin-IX biosynthesis; 5-aminolevulinate from L-glutamyl-tRNA(Glu): step 2/2. In Actinobacillus pleuropneumoniae serotype 5b (strain L20), this protein is Glutamate-1-semialdehyde 2,1-aminomutase.